The following is a 339-amino-acid chain: Phenylalanine--tRNA ligase alpha subunit (339 aa).

Glu254 contributes to the Mg(2+) binding site.

It belongs to the class-II aminoacyl-tRNA synthetase family. Phe-tRNA synthetase alpha subunit type 1 subfamily. As to quaternary structure, tetramer of two alpha and two beta subunits. It depends on Mg(2+) as a cofactor.

Its subcellular location is the cytoplasm. It catalyses the reaction tRNA(Phe) + L-phenylalanine + ATP = L-phenylalanyl-tRNA(Phe) + AMP + diphosphate + H(+). The chain is Phenylalanine--tRNA ligase alpha subunit from Acetivibrio thermocellus (strain ATCC 27405 / DSM 1237 / JCM 9322 / NBRC 103400 / NCIMB 10682 / NRRL B-4536 / VPI 7372) (Clostridium thermocellum).